The sequence spans 513 residues: ATP synthase subunit alpha 2 (513 aa).

152–159 contributes to the ATP binding site; the sequence is GDSKTGKT.

The protein belongs to the ATPase alpha/beta chains family. As to quaternary structure, F-type ATPases have 2 components, CF(1) - the catalytic core - and CF(0) - the membrane proton channel. CF(1) has five subunits: alpha(3), beta(3), gamma(1), delta(1), epsilon(1). CF(0) has three main subunits: a(1), b(2) and c(9-12). The alpha and beta chains form an alternating ring which encloses part of the gamma chain. CF(1) is attached to CF(0) by a central stalk formed by the gamma and epsilon chains, while a peripheral stalk is formed by the delta and b chains.

It localises to the cell membrane. It catalyses the reaction ATP + H2O + 4 H(+)(in) = ADP + phosphate + 5 H(+)(out). In terms of biological role, produces ATP from ADP in the presence of a proton gradient across the membrane. The alpha chain is a regulatory subunit. In Mycoplasmopsis pulmonis (strain UAB CTIP) (Mycoplasma pulmonis), this protein is ATP synthase subunit alpha 2.